We begin with the raw amino-acid sequence, 208 residues long: Large ribosomal subunit protein eL13 (208 aa).

It belongs to the eukaryotic ribosomal protein eL13 family.

The sequence is that of Large ribosomal subunit protein eL13 (RPL13) from Chlamydomonas sp. (strain W80).